The primary structure comprises 174 residues: MGKIIFYEDRNFQGRSYECSSDCSDMSTYLSRCHSCRVESGCFVVYDVPNYMGNQFFMRRGEYADYMRMGMSDGIRSCRMVPQYRGPYRMRIYERENFGGQMYDLTDDCDSFVDRYRMSDCQSCHVMDGHWLMYEQPHYRGRIVYFRPGEYRSFRDMGYSNVKFSSVRRIMDLC.

Beta/gamma crystallin 'Greek key' domains follow at residues 2-40 (GKIIFYEDRNFQGRSYECSSDCSDMSTYLSRCHSCRVES) and 41-82 (GCFV…RMVP). The connecting peptide stretch occupies residues 83–87 (QYRGP). 2 consecutive Beta/gamma crystallin 'Greek key' domains span residues 88–128 (YRMR…HVMD) and 129–171 (GHWL…RRIM).

It belongs to the beta/gamma-crystallin family. In terms of assembly, monomer.

Its function is as follows. Crystallins are the dominant structural components of the vertebrate eye lens. The polypeptide is Gamma-crystallin M3 (Cyprinus carpio (Common carp)).